A 585-amino-acid polypeptide reads, in one-letter code: Arginine--tRNA ligase (585 aa).

A 'HIGH' region motif is present at residues 127–137; sequence PNTNKPLHVGH.

This sequence belongs to the class-I aminoacyl-tRNA synthetase family. Monomer.

The protein localises to the cytoplasm. The catalysed reaction is tRNA(Arg) + L-arginine + ATP = L-arginyl-tRNA(Arg) + AMP + diphosphate. This Borreliella afzelii (strain PKo) (Borrelia afzelii) protein is Arginine--tRNA ligase.